The following is a 260-amino-acid chain: 5'-nucleotidase SurE (260 aa).

4 residues coordinate a divalent metal cation: D10, D11, S41, and N95.

Belongs to the SurE nucleotidase family. The cofactor is a divalent metal cation.

The protein resides in the cytoplasm. The enzyme catalyses a ribonucleoside 5'-phosphate + H2O = a ribonucleoside + phosphate. In terms of biological role, nucleotidase that shows phosphatase activity on nucleoside 5'-monophosphates. The polypeptide is 5'-nucleotidase SurE (Methanoregula boonei (strain DSM 21154 / JCM 14090 / 6A8)).